A 424-amino-acid chain; its full sequence is Phosphomethylpyrimidine synthase 2 (424 aa).

Residues asparagine 65, methionine 94, tyrosine 123, histidine 162, 184–186 (SRG), 225–228 (DGLR), and glutamate 264 contribute to the substrate site. Histidine 268 is a binding site for Zn(2+). Residue tyrosine 291 coordinates substrate. Residue histidine 332 participates in Zn(2+) binding. Cysteine 408, cysteine 411, and cysteine 415 together coordinate [4Fe-4S] cluster.

This sequence belongs to the ThiC family. It depends on [4Fe-4S] cluster as a cofactor.

The enzyme catalyses 5-amino-1-(5-phospho-beta-D-ribosyl)imidazole + S-adenosyl-L-methionine = 4-amino-2-methyl-5-(phosphooxymethyl)pyrimidine + CO + 5'-deoxyadenosine + formate + L-methionine + 3 H(+). It participates in cofactor biosynthesis; thiamine diphosphate biosynthesis. Functionally, catalyzes the synthesis of the hydroxymethylpyrimidine phosphate (HMP-P) moiety of thiamine from aminoimidazole ribotide (AIR) in a radical S-adenosyl-L-methionine (SAM)-dependent reaction. The chain is Phosphomethylpyrimidine synthase 2 from Methanothermobacter thermautotrophicus (strain ATCC 29096 / DSM 1053 / JCM 10044 / NBRC 100330 / Delta H) (Methanobacterium thermoautotrophicum).